Here is a 1361-residue protein sequence, read N- to C-terminus: MGAAGRQDFLFKAMLTISWLTLTCFPGATSTVAAGCPDQSPELQPWNPGHDQDHHVHIGQGKTLLLTSSATVYSIHISEGGKLVIKDHDEPIVLRTRHILIDNGGELHAGSALCPFQGNFTIILYGRADEGIQPDPYYGLKYIGVGKGGALELHGQKKLSWTFLNKTLHPGGMAEGGYFFERSWGHRGVIVHVIDPKSGTVIHSDRFDTYRSKKESERLVQYLNAVPDGRILSVAVNDEGSRNLDDMARKAMTKLGSKHFLHLGFRHPWSFLTVKGNPSSSVEDHIEYHGHRGSAAARVFKLFQTEHGEYFNVSLSSEWVQDVEWTEWFDHDKVSQTKGGEKISDLWKAHPGKICNRPIDIQATTMDGVNLSTEVVYKKGQDYRFACYDRGRACRSYRVRFLCGKPVRPKLTVTIDTNVNSTILNLEDNVQSWKPGDTLVIASTDYSMYQAEEFQVLPCRSCAPNQVKVAGKPMYLHIGEEIDGVDMRAEVGLLSRNIIVMGEMEDKCYPYRNHICNFFDFDTFGGHIKFALGFKAAHLEGTELKHMGQQLVGQYPIHFHLAGDVDERGGYDPPTYIRDLSIHHTFSRCVTVHGSNGLLIKDVVGYNSLGHCFFTEDGPEERNTFDHCLGLLVKSGTLLPSDRDSKMCKMITEDSYPGYIPKPRQDCNAVSTFWMANPNNNLINCAAAGSEETGFWFIFHHVPTGPSVGMYSPGYSEHIPLGKFYNNRAHSNYRAGMIIDNGVKTTEASAKDKRPFLSIISARYSPHQDADPLKPREPAIIRHFIAYKNQDHGAWLRGGDVWLDSCRFADNGIGLTLASGGTFPYDDGSKQEIKNSLFVGESGNVGTEMMDNRIWGPGGLDHSGRTLPIGQNFPIRGIQLYDGPINIQNCTFRKFVALEGRHTSALAFRLNNAWQSCPHNNVTGIAFEDVPITSRVFFGEPGPWFNQLDMDGDKTSVFHDVDGSVSEYPGSYLTKNDNWLVRHPDCINVPDWRGAICSGCYAQMYIQAYKTSNLRMKIIKNDFPSHPLYLEGALTRSTHYQQYQPVVTLQKGYTIHWDQTAPAELAIWLINFNKGDWIRVGLCYPRGTTFSILSDVHNRLLKQTSKTGVFVRTLQMDKVEQSYPGRSHYYWDEDSGLLFLKLKAQNEREKFAFCSMKGCERIKIKALIPKNAGVSDCTATAYPKFTERAVVDVPMPKKLFGSQLKTKDHFLEVKMESSKQHFFHLWNDFAYIEVDGKKYPSSEDGIQVVVIDGNQGRVVSHTSFRNSILQGIPWQLFNYVATIPDNSIVLMASKGRYVSRGPWTRVLEKLGADRGLKLKEQMAFVGFKGSFRPIWVTLDTEDHKAKIFQVVPIPVVKKKKL.

A signal peptide spans 1–30 (MGAAGRQDFLFKAMLTISWLTLTCFPGATS). The 123-residue stretch at 44 to 166 (QPWNPGHDQD…KKLSWTFLNK (123 aa)) folds into the G8 domain. N-linked (GlcNAc...) asparagine glycans are attached at residues asparagine 119, asparagine 165, asparagine 312, asparagine 370, and asparagine 420. Positions 176–317 (GGYFFERSWG…GEYFNVSLSS (142 aa)) constitute a GG-type lectin 1 domain. A necessary for its endoplasmic reticulum (ER) retention and interaction with HSPA5 region spans residues 295 to 591 (AAARVFKLFQ…IHHTFSRCVT (297 aa)). 4 PbH1 repeats span residues 572–594 (DPPT…TVHG), 595–617 (SNGL…FTED), 719–741 (IPLG…IIDN), and 798–819 (GGDV…TLAS). Residues asparagine 889 and asparagine 921 are each glycosylated (N-linked (GlcNAc...) asparagine). Residues 1227–1361 (NDFAYIEVDG…PIPVVKKKKL (135 aa)) enclose the GG-type lectin 2 domain.

The protein belongs to the CEMIP family. In terms of assembly, interacts with EPHA2 and ITPR3. Interacts with HSPA5/BIP; the interaction induces calcium leakage from the endoplasmic reticulum and cell migration. Interacts with clathrin heavy chain/CLTC. In terms of processing, N-glycosylated; glycosylation is not necessary for HA-binding. In terms of tissue distribution, expressed in dermal and in synovial fibroblasts. Strongly expressed in gastric cancers compared with the paired normal tissues. Strongly expressed in both ductal carcinoma and invasive breast cancer cells compared with benign epithelial cells (at protein level). Strongly expressed in brain, placenta, prostate, breast, lung and testis. Expressed in fibroblasts, epithelial cells and cancer cells. In ear, it is specifically expressed in inner ear. Expressed in cochlea and vestibule tissues. Strongly expressed in gastric cancers compared with the paired normal tissues. Strongly expressed in colon adenocarcinomas compared with normal colonic mucosas. Strongly expressed in breast cancer as compared to normal breast tissue.

It is found in the nucleus. It localises to the cytoplasm. The protein localises to the endoplasmic reticulum. The protein resides in the cell membrane. Its subcellular location is the membrane. It is found in the clathrin-coated pit. It localises to the secreted. It catalyses the reaction Random hydrolysis of (1-&gt;4)-linkages between N-acetyl-beta-D-glucosamine and D-glucuronate residues in hyaluronate.. Its activity is regulated as follows. Activity is up-regulated by histamine. Its function is as follows. Mediates depolymerization of hyaluronic acid (HA) via the cell membrane-associated clathrin-coated pit endocytic pathway. Binds to hyaluronic acid. Hydrolyzes high molecular weight hyaluronic acid to produce an intermediate-sized product, a process that may occur through rapid vesicle endocytosis and recycling without intracytoplasmic accumulation or digestion in lysosomes. Involved in hyaluronan catabolism in the dermis of the skin and arthritic synovium. Positively regulates epithelial-mesenchymal transition (EMT), and hence tumor cell growth, invasion and cancer dissemination. In collaboration with HSPA5/BIP, promotes cancer cell migration in a calcium and PKC-dependent manner. May be involved in hearing. In Homo sapiens (Human), this protein is Cell migration-inducing and hyaluronan-binding protein.